Reading from the N-terminus, the 687-residue chain is Mu-like prophage FluMu transposase A (687 aa).

The 67-residue stretch at 8–74 (THYSVYELAN…ELLLKTTPEQ (67 aa)) folds into the HTH Mu-type domain. The H-T-H motif DNA-binding region spans 398–417 (PIERAFSHGGLGDYVDKHLL).

This transposase is essential for integration, replication-transposition, and excision of Mu-like viral DNA. The polypeptide is Mu-like prophage FluMu transposase A (Haemophilus influenzae (strain ATCC 51907 / DSM 11121 / KW20 / Rd)).